A 435-amino-acid polypeptide reads, in one-letter code: Transcription factor tau 55 kDa subunit (435 aa).

Positions 362–417 are disordered; that stretch reads GLLSPTEENETTNAGQSKGSSTANDPNIQIQEEDVGLPDSTNTSRDHTGDKEEVQS. S365 is subject to Phosphoserine. Over residues 372-391 the composition is skewed to polar residues; that stretch reads TTNAGQSKGSSTANDPNIQI. Over residues 405 to 417 the composition is skewed to basic and acidic residues; sequence SRDHTGDKEEVQS.

Component of the TFIIIC complex composed of TFC1, TFC3, TFC4, TFC6, TFC7 and TFC8. The subunits are organized in two globular domains, tauA and tauB, connected by a proteolysis-sensitive and flexible linker.

The protein localises to the nucleus. In terms of biological role, TFIIIC mediates tRNA and 5S RNA gene activation by binding to intragenic promoter elements. Upstream of the transcription start site, TFIIIC assembles the initiation complex TFIIIB-TFIIIC-tDNA, which is sufficient for RNA polymerase III recruitment and function. Part of the tauA domain of TFIIIC that binds boxA DNA promoter sites of tRNA and similar genes. This chain is Transcription factor tau 55 kDa subunit (TFC7), found in Saccharomyces cerevisiae (strain ATCC 204508 / S288c) (Baker's yeast).